The sequence spans 723 residues: Catalase-peroxidase (723 aa).

An N-terminal signal peptide occupies residues 1 to 29 (MDGNDLVENKCPVMHGGITVAGHSNTAWW). The tryptophyl-tyrosyl-methioninium (Trp-Tyr) (with M-251) cross-link spans 97 to 225 (WHSAGSYRLA…LAAVQMGLIY (129 aa)). Histidine 98 functions as the Proton acceptor in the catalytic mechanism. The segment at residues 225–251 (YVNPEGVNGKSDPLKSAAQVRETFARM) is a cross-link (tryptophyl-tyrosyl-methioninium (Tyr-Met) (with W-97)). Heme b is bound at residue histidine 266.

It belongs to the peroxidase family. Peroxidase/catalase subfamily. Homodimer or homotetramer. Requires heme b as cofactor. In terms of processing, formation of the three residue Trp-Tyr-Met cross-link is important for the catalase, but not the peroxidase activity of the enzyme.

It carries out the reaction H2O2 + AH2 = A + 2 H2O. The enzyme catalyses 2 H2O2 = O2 + 2 H2O. Its function is as follows. Bifunctional enzyme with both catalase and broad-spectrum peroxidase activity. This Hyphomonas neptunium (strain ATCC 15444) protein is Catalase-peroxidase.